A 282-amino-acid polypeptide reads, in one-letter code: Nucleotide-binding protein Shew_3314 (282 aa).

Position 8–15 (8–15 (GRSGSGKS)) interacts with ATP. Residue 56–59 (DVRN) participates in GTP binding.

Belongs to the RapZ-like family.

Its function is as follows. Displays ATPase and GTPase activities. The chain is Nucleotide-binding protein Shew_3314 from Shewanella loihica (strain ATCC BAA-1088 / PV-4).